A 169-amino-acid chain; its full sequence is Thiol peroxidase (169 aa).

Residues 19–167 form the Thioredoxin domain; the sequence is LKVGDRAPEA…YDEVVNKVKE (149 aa). C61 (cysteine sulfenic acid (-SOH) intermediate) is an active-site residue. C61 and C95 are joined by a disulfide.

It belongs to the peroxiredoxin family. Tpx subfamily. Homodimer.

The enzyme catalyses a hydroperoxide + [thioredoxin]-dithiol = an alcohol + [thioredoxin]-disulfide + H2O. Its function is as follows. Thiol-specific peroxidase that catalyzes the reduction of hydrogen peroxide and organic hydroperoxides to water and alcohols, respectively. Plays a role in cell protection against oxidative stress by detoxifying peroxides. The polypeptide is Thiol peroxidase (Aquifex aeolicus (strain VF5)).